We begin with the raw amino-acid sequence, 109 residues long: Protein reprimo (109 aa).

2 N-linked (GlcNAc...) asparagine glycosylation sites follow: Asn-7 and Asn-18. A helical transmembrane segment spans residues 56–76 (VVQIAVMCVLSLTVVFGIFFL). Position 98 is a phosphoserine (Ser-98).

It belongs to the reprimo family.

The protein resides in the cytoplasm. Its subcellular location is the membrane. Functionally, may be involved in the regulation of p53-dependent G2 arrest of the cell cycle. Seems to induce cell cycle arrest by inhibiting CDK1 activity and nuclear translocation of the CDC2 cyclin B1 complex. This chain is Protein reprimo (RPRM), found in Homo sapiens (Human).